A 430-amino-acid polypeptide reads, in one-letter code: Levansucrase Lscgamma (430 aa).

Residues Trp60, Asp61, Ala147, Arg217, and Asp218 each coordinate sucrose. Asp61 (nucleophile) is an active-site residue. Glu302 serves as the catalytic Proton donor/acceptor.

It belongs to the glycosyl hydrolase 68 family. In terms of assembly, homodimer.

The enzyme catalyses [6)-beta-D-fructofuranosyl-(2-&gt;](n) alpha-D-glucopyranoside + sucrose = [6)-beta-D-fructofuranosyl-(2-&gt;](n+1) alpha-D-glucopyranoside + D-glucose. Its activity is regulated as follows. Sucrose hydrolase activity is negatively affected by salt concentration. The levan polymerization rate increases sharply in relation to sucrose concentration reaching the maximum at 100 mM sucrose, and then steadily decreases, suggesting a strong inhibition of the activity by the substrate. In terms of biological role, catalyzes the synthesis of levan, a fructose polymer, by transferring the fructosyl moiety from sucrose to a growing acceptor molecule. Also displays sucrose hydrolase activity. Can depolymerize the levan produced once substrate is completely exhausted. The chain is Levansucrase Lscgamma from Pseudomonas syringae pv. actinidiae.